Consider the following 144-residue polypeptide: Large ribosomal subunit protein uL15 (144 aa).

A disordered region spans residues 1-52 (MRLNSLSPAEGAKHSAKRLGRGISSGLGKTGGRGHKGQKSRTGGGVRRGFEG).

This sequence belongs to the universal ribosomal protein uL15 family. Part of the 50S ribosomal subunit.

Its function is as follows. Binds to the 23S rRNA. This is Large ribosomal subunit protein uL15 from Actinobacillus pleuropneumoniae serotype 7 (strain AP76).